Consider the following 599-residue polypeptide: Elongation factor 4 (599 aa).

Residues 2-184 (KNIRNFSIIA…RLVRDIPPPQ (183 aa)) enclose the tr-type G domain. Residues 14-19 (DHGKST) and 131-134 (NKID) each bind GTP.

Belongs to the TRAFAC class translation factor GTPase superfamily. Classic translation factor GTPase family. LepA subfamily.

It is found in the cell inner membrane. It carries out the reaction GTP + H2O = GDP + phosphate + H(+). Its function is as follows. Required for accurate and efficient protein synthesis under certain stress conditions. May act as a fidelity factor of the translation reaction, by catalyzing a one-codon backward translocation of tRNAs on improperly translocated ribosomes. Back-translocation proceeds from a post-translocation (POST) complex to a pre-translocation (PRE) complex, thus giving elongation factor G a second chance to translocate the tRNAs correctly. Binds to ribosomes in a GTP-dependent manner. The chain is Elongation factor 4 from Salmonella paratyphi C (strain RKS4594).